Reading from the N-terminus, the 302-residue chain is uncharacterized protein (302 aa).

The active site involves Glu47.

Belongs to the PhzF family.

This is an uncharacterized protein from Mesorhizobium japonicum (strain LMG 29417 / CECT 9101 / MAFF 303099) (Mesorhizobium loti (strain MAFF 303099)).